A 481-amino-acid polypeptide reads, in one-letter code: RAC-alpha serine/threonine-protein kinase (481 aa).

Residues 5–108 (AIVKEGWLHK…WIQVIQHVAD (104 aa)) form the PH domain. The tract at residues 120 to 141 (VRSGDSPSDNSGAEEMEVSHSK) is disordered. O-linked (GlcNAc) serine glycans are attached at residues S127 and S130. The region spanning 151-409 (FEYLKLLGKG…AKEIMQHKFF (259 aa)) is the Protein kinase domain. Residues 157–165 (LGKGTFGKV) and K180 contribute to the ATP site. The active-site Proton acceptor is the D275. A glycan (O-linked (GlcNAc) threonine) is linked at T306. Position 309 is a phosphothreonine; by PDPK1 (T309). T313 carries an O-linked (GlcNAc) threonine glycan. The AGC-kinase C-terminal domain maps to 410–481 (AGIVWQDVYE…QFSYSASGNA (72 aa)). S474 carries the phosphoserine modification. Residue S474 is glycosylated (O-linked (GlcNAc) serine; alternate). The residue at position 475 (Y475) is a Phosphotyrosine.

This sequence belongs to the protein kinase superfamily. AGC Ser/Thr protein kinase family. RAC subfamily. In terms of processing, cleavage by caspase-3/CASP3. Cleaved at the caspase-3 consensus site Asp-463 during apoptosis, resulting in down-regulation of the AKT signaling pathway and decreased cell survival. Phosphorylation on Thr-309 and Ser-474 is required for full activity. Phosphorylation of the activation loop at Thr-309 by PDPK1/PDK1 is a prerequisite for full activation. Phosphorylation by mTORC2 at Ser-474 in response to growth factors plays a key role in AKT1 activation by facilitating subsequent phosphorylation of the activation loop by PDPK1/PDK1. As to expression, expressed in the oocyte.

The protein resides in the cytoplasm. It localises to the nucleus. It carries out the reaction L-seryl-[protein] + ATP = O-phospho-L-seryl-[protein] + ADP + H(+). The catalysed reaction is L-threonyl-[protein] + ATP = O-phospho-L-threonyl-[protein] + ADP + H(+). With respect to regulation, activated in response to insulin. Three specific sites, one in the kinase domain (Thr-309) and the two other ones in the C-terminal regulatory region (Ser-474 and Tyr-475), need to be phosphorylated for its full activation. Its function is as follows. AKT1 is one of several closely related serine/threonine-protein kinases known as the AKT kinase, and which regulate many processes including metabolism, proliferation, cell survival, growth and angiogenesis. This is mediated through serine and/or threonine phosphorylation of a range of downstream substrates. Over 100 substrate candidates have been reported so far, but for most of them, no isoform specificity has been reported. Signals downstream of phosphatidylinositol 3-kinase (PI(3)K) to mediate the effects of various growth factors such as platelet-derived growth factor (PDGF), epidermal growth factor (EGF), insulin and insulin-like growth factor 1 (IGF1). Plays a role as a key modulator of the AKT-mTOR signaling pathway controlling the tempo of the process of newborn neurons integration during adult neurogenesis, including correct neuron positioning, dendritic development and synapse formation. Plays a role in glucose transport by mediating insulin-induced translocation of the GLUT4 glucose transporter to the cell surface. Mediates the antiapoptotic effects of IGF1. Mediates insulin-stimulated protein synthesis, partly by playing a role in both insulin-induced phosphorylation of 4E-BP1 and in insulin-induced activation of p70 S6 kinase. Promotes glycogen synthesis by mediating the insulin-induced activation of glycogen synthase. Required for insulin-stimulated meiotic reinitiation during oocyte maturation. May be involved in the regulation of vesicular functions such as preciliary trafficking and endocytic recycling. This is RAC-alpha serine/threonine-protein kinase from Xenopus laevis (African clawed frog).